The primary structure comprises 474 residues: Light-independent protochlorophyllide reductase subunit N (474 aa).

[4Fe-4S] cluster-binding residues include Cys22, Cys47, and Cys107.

It belongs to the BchN/ChlN family. In terms of assembly, protochlorophyllide reductase is composed of three subunits; ChlL, ChlN and ChlB. Forms a heterotetramer of two ChlB and two ChlN subunits. Requires [4Fe-4S] cluster as cofactor.

It is found in the plastid. It localises to the chloroplast. It carries out the reaction chlorophyllide a + oxidized 2[4Fe-4S]-[ferredoxin] + 2 ADP + 2 phosphate = protochlorophyllide a + reduced 2[4Fe-4S]-[ferredoxin] + 2 ATP + 2 H2O. Its pathway is porphyrin-containing compound metabolism; chlorophyll biosynthesis (light-independent). Functionally, component of the dark-operative protochlorophyllide reductase (DPOR) that uses Mg-ATP and reduced ferredoxin to reduce ring D of protochlorophyllide (Pchlide) to form chlorophyllide a (Chlide). This reaction is light-independent. The NB-protein (ChlN-ChlB) is the catalytic component of the complex. The polypeptide is Light-independent protochlorophyllide reductase subunit N (Physcomitrium patens (Spreading-leaved earth moss)).